We begin with the raw amino-acid sequence, 263 residues long: Small ribosomal subunit protein eS4 (263 aa).

Residues 42-104 (LPLIVFLRNR…TGEHFRLVYD (63 aa)) form the S4 RNA-binding domain.

Belongs to the eukaryotic ribosomal protein eS4 family.

The chain is Small ribosomal subunit protein eS4 (RPS4Y1) from Pan paniscus (Pygmy chimpanzee).